We begin with the raw amino-acid sequence, 535 residues long: Tetrathionate hydrolase (535 aa).

The N-terminal stretch at 1–39 (MNLKILVGLFILGIIILSAMTFLNFTTIVAQDKGDQQPK) is a signal peptide. N-linked (GlcNAc...) asparagine glycosylation is present at Asn50.

The protein belongs to the tetrathionate hydrolase family. Monomer and homodimer; in equilibrium.

The protein localises to the cell surface. The catalysed reaction is tetrathionate + H2O = sulfur + thiosulfate + sulfate + H(+). Functionally, catalyzes the hydrolysis of tetrathionate to generate elemental sulfur, thiosulfate and sulfate. The chain is Tetrathionate hydrolase from Acidianus ambivalens (Desulfurolobus ambivalens).